A 356-amino-acid polypeptide reads, in one-letter code: Carbohydrate sulfotransferase 10 (356 aa).

The Cytoplasmic portion of the chain corresponds to Met-1–Leu-6. A helical; Signal-anchor for type II membrane protein transmembrane segment spans residues Leu-7–Leu-27. Residues Thr-28–Asn-356 are Lumenal-facing. Asn-99 carries an N-linked (GlcNAc...) asparagine glycan. 3'-phosphoadenylyl sulfate-binding positions include Pro-127–Gln-133 and Arg-189–Ser-197. Residues Asn-228 and Asn-316 are each glycosylated (N-linked (GlcNAc...) asparagine).

Belongs to the sulfotransferase 2 family. In terms of tissue distribution, in myogenic progenitors, it is ubiquitously expressed.

It localises to the golgi apparatus membrane. It catalyses the reaction 3-O-{beta-D-GlcA-(1-&gt;[3)-alpha-D-Xyl-(1-&gt;3)-beta-D-GlcA-(1-&gt;](n)-4)-beta-D-Xyl-(1-&gt;4)-Rib-ol-P-Rib-ol-P-3-beta-D-GalNAc-(1-&gt;3)-beta-D-GlcNAc-(1-&gt;4)-O-6-P-alpha-D-Man}-L-Thr-[protein] + 3'-phosphoadenylyl sulfate = 3-O-{O-3-S-beta-D-GlcA-(1-&gt;[3)-alpha-D-Xyl-(1-&gt;3)-beta-D-GlcA-(1-&gt;](n)-4)-beta-D-Xyl-(1-&gt;4)-Rib-ol-P-Rib-ol-P-3-beta-D-GalNAc-(1-&gt;3)-beta-D-GlcNAc-(1-&gt;4)-O-6-P-alpha-D-Man}-L-Thr-[protein] + adenosine 3',5'-bisphosphate + H(+). It carries out the reaction 17beta-estradiol 3-O-(beta-D-glucuronate) + 3'-phosphoadenylyl sulfate = 17beta-estradiol 3-O-(3-sulfo-beta-D-glucuronate) + adenosine 3',5'-bisphosphate + H(+). The catalysed reaction is 17beta-estradiol 3-O-(beta-D-glucuronate) 17-sulfate + 3'-phosphoadenylyl sulfate = 17beta-estradiol 3-O-(3-sulfo-beta-D-glucuronate) 17-sulfate + adenosine 3',5'-bisphosphate + H(+). The enzyme catalyses 17beta-estradiol 17-O-(beta-D-glucuronate) + 3'-phosphoadenylyl sulfate = 17beta-estradiol 17-O-(3-sulfo-beta-D-glucuronate) + adenosine 3',5'-bisphosphate + H(+). It catalyses the reaction 16alpha,17beta-estriol 3-O-(beta-D-glucuronate) + 3'-phosphoadenylyl sulfate = 16alpha,17beta-estriol 3-O-(3-sulfo-beta-D-glucuronate) + adenosine 3',5'-bisphosphate + H(+). It carries out the reaction 16alpha,17beta-estriol 16-O-(beta-D-glucuronate) + 3'-phosphoadenylyl sulfate = 16alpha,17beta-estriol 16-O-(3-sulfo-beta-D-glucuronate) + adenosine 3',5'-bisphosphate + H(+). The catalysed reaction is 16alpha,17beta-estriol 17-O-(beta-D-glucuronate) + 3'-phosphoadenylyl sulfate = 16alpha,17beta-estriol 17-O-(3-sulfo-beta-D-glucuronate) + adenosine 3',5'-bisphosphate + H(+). The enzyme catalyses estrone 3-O-(beta-D-glucuronate) + 3'-phosphoadenylyl sulfate = estrone 3-O-(3-sulfo-beta-D-glucuronate) + adenosine 3',5'-bisphosphate + H(+). It catalyses the reaction 3alpha,20alpha-dihydroxy-5beta-pregnane 3-O-(beta-D-glucuronate) + 3'-phosphoadenylyl sulfate = 3alpha,20alpha-dihydroxy-5beta-pregnane 3-O-(3-sulfo-beta-D-glucuronate) + adenosine 3',5'-bisphosphate + H(+). It carries out the reaction testosterone 17-O-(beta-D-glucuronate) + 3'-phosphoadenylyl sulfate = testosterone 17-O-(3-sulfo-beta-D-glucuronate) + adenosine 3',5'-bisphosphate + H(+). The catalysed reaction is 3beta-androst-5-en-17-one 3-O-(beta-D-glucuronate) + 3'-phosphoadenylyl sulfate = 3beta-androst-5-en-17-one 3-O-(3-sulfo-beta-D-glucuronate) + adenosine 3',5'-bisphosphate + H(+). The enzyme catalyses 3alpha,17alpha-dihydroxy-5beta-androstane-11-one-17beta-carboxylate 3-O-(beta-D-glucuronate) + 3'-phosphoadenylyl sulfate = 3alpha,17alpha-dihydroxy-5beta-androstane-11-one-17beta-carboxylate 3-O-(3-sulfo-beta-D-glucuronate) + adenosine 3',5'-bisphosphate + H(+). It catalyses the reaction 3alpha-hydroxyetiocholan-17-one 3-O-(beta-D-glucuronate) + 3'-phosphoadenylyl sulfate = 3alpha-hydroxyetiocholan-17-one 3-O-(3-sulfo-beta-D-glucuronate) + adenosine 3',5'-bisphosphate + H(+). Its pathway is steroid metabolism. It participates in protein modification; carbohydrate sulfation. In terms of biological role, catalyzes the transfer of sulfate from 3'-phosphoadenylyl sulfate (PAPS) to position 3 of terminal glucuronic acid of both protein- and lipid-linked oligosaccharides. Participates in biosynthesis of HNK-1 carbohydrate structure 3-O-sulfo-beta-D-GlcA-(1-&gt;3)-beta-D-Gal-(1-&gt;4)-D-GlcNAc-R, a sulfated glucuronyl-lactosaminyl residue carried by many neural recognition molecules, which is involved in cell interactions during ontogenetic development and in synaptic plasticity in the adult. May be indirectly involved in synapse plasticity of the hippocampus, via its role in HNK-1 biosynthesis. Sulfates terminal glucuronyl residue of the laminin globular (LG)-domain binding epitope on DAG1/alpha-dystroglycan and prevents further polymerization by LARGE1 glycosyltransferase. Likely defines the chain length of LG epitope, conferring binding specificity to extracellular matrix components. Plays a role in down-regulating the steroid hormones. Sulfates glucuronidated estrogens and androgens with an impact in hormone cycle and fertility. Has a preference for glucuronyl moiety at the 3-hydroxyl group of a sterol ring rather than the 17-hydroxyl group, showing high catalytic efficiency for 17beta-estradiol 3-O-(beta-D-glucuronate) and dehydroepiandrosterone 3-O-(beta-D-glucuronate) hormones. The sequence is that of Carbohydrate sulfotransferase 10 (Chst10) from Rattus norvegicus (Rat).